Here is a 428-residue protein sequence, read N- to C-terminus: Serine--tRNA ligase (428 aa).

231-233 (TSE) serves as a coordination point for L-serine. ATP contacts are provided by residues 262-264 (RRE) and valine 278. Glutamate 285 contacts L-serine. 349 to 352 (ELTS) lines the ATP pocket. Threonine 384 provides a ligand contact to L-serine.

The protein belongs to the class-II aminoacyl-tRNA synthetase family. Type-1 seryl-tRNA synthetase subfamily. In terms of assembly, homodimer. The tRNA molecule binds across the dimer.

It is found in the cytoplasm. It carries out the reaction tRNA(Ser) + L-serine + ATP = L-seryl-tRNA(Ser) + AMP + diphosphate + H(+). The catalysed reaction is tRNA(Sec) + L-serine + ATP = L-seryl-tRNA(Sec) + AMP + diphosphate + H(+). The protein operates within aminoacyl-tRNA biosynthesis; selenocysteinyl-tRNA(Sec) biosynthesis; L-seryl-tRNA(Sec) from L-serine and tRNA(Sec): step 1/1. Functionally, catalyzes the attachment of serine to tRNA(Ser). Is also able to aminoacylate tRNA(Sec) with serine, to form the misacylated tRNA L-seryl-tRNA(Sec), which will be further converted into selenocysteinyl-tRNA(Sec). This is Serine--tRNA ligase from Bifidobacterium longum (strain DJO10A).